We begin with the raw amino-acid sequence, 630 residues long: PR domain zinc finger protein 5 (630 aa).

Positions 8 to 124 constitute an SET domain; sequence DRFSLKSSRV…TDTELLIGYL (117 aa). The segment at 167–190 adopts a C2H2-type 1 zinc-finger fold; that stretch reads YACPQCESSFTSEDILAEHLQTLH. The segment at 199-221 adopts a C2H2-type 2; atypical zinc-finger fold; the sequence is FKCKNCGKKFPVKQALQRHVLQC. The C2H2-type 3; atypical zinc finger occupies 234-256; that stretch reads FQCSVCNSSFSSASSFEQHQETC. 13 consecutive C2H2-type zinc fingers follow at residues 262 to 287, 295 to 317, 320 to 342, 348 to 370, 376 to 398, 404 to 426, 432 to 455, 461 to 483, 489 to 511, 517 to 539, 545 to 567, 573 to 595, and 602 to 625; these read FVCKADSCGKRLKSKDALKRHQENVH, LICSVCNKKCSSASSLQEHRKIH, FDCQECMKKFISANQLKRHMITH, YNCEICNKSFKRLDQVGAHKVIH, YKCKLCGKGFAHRNVYKNHKKTH, FQCEECKALFRTPFSLQRHLLIH, FKCHHCDATFKRKDTLNVHVQVVH, YRCELCNKAFVTPSVLRSHKKTH, KICPYCGQKFASSGTLRVHIRSH, YQCPYCEKGFSKNDGLKMHIRTH, YKCSECSKAFSQKRGLDEHKRTH, FQCDVCDLAFSLKKMLIRHKMTH, and AECQFCHKKFTRNDYLKVHMDNIH.

This sequence belongs to the class V-like SAM-binding methyltransferase superfamily. In terms of assembly, interacts with EHMT2/G9A, GFI1 and HDAC1. Widely expressed with highest levels in colon and ovary. Tends to be silenced in breast, colorectal, gastric and liver cancer tissues.

Its subcellular location is the nucleus. Functionally, sequence-specific DNA-binding transcription factor. Represses transcription at least in part by recruitment of the histone methyltransferase EHMT2/G9A and histone deacetylases such as HDAC1. Regulates hematopoiesis-associated protein-coding and microRNA (miRNA) genes. May regulate the expression of proteins involved in extracellular matrix development and maintenance, including fibrillar collagens, such as COL4A1 and COL11A1, connective tissue components, such as HAPLN1, and molecules regulating cell migration and adhesion, including EDIL3 and TGFB2. May cause G2/M arrest and apoptosis in cancer cells. This chain is PR domain zinc finger protein 5 (PRDM5), found in Homo sapiens (Human).